A 217-amino-acid polypeptide reads, in one-letter code: Octanoyltransferase (217 aa).

Residues 32–207 (SDSPDELWIV…TLSQLLGYQQ (176 aa)) form the BPL/LPL catalytic domain. Substrate contacts are provided by residues 71–78 (RGGQVTYH), 138–140 (SLG), and 151–153 (GLA). Cys169 (acyl-thioester intermediate) is an active-site residue.

Belongs to the LipB family.

The protein localises to the cytoplasm. The catalysed reaction is octanoyl-[ACP] + L-lysyl-[protein] = N(6)-octanoyl-L-lysyl-[protein] + holo-[ACP] + H(+). It functions in the pathway protein modification; protein lipoylation via endogenous pathway; protein N(6)-(lipoyl)lysine from octanoyl-[acyl-carrier-protein]: step 1/2. Catalyzes the transfer of endogenously produced octanoic acid from octanoyl-acyl-carrier-protein onto the lipoyl domains of lipoate-dependent enzymes. Lipoyl-ACP can also act as a substrate although octanoyl-ACP is likely to be the physiological substrate. This chain is Octanoyltransferase, found in Shewanella sp. (strain ANA-3).